We begin with the raw amino-acid sequence, 274 residues long: 4-deoxy-L-threo-5-hexosulose-uronate ketol-isomerase (274 aa).

Positions 192, 194, 199, and 241 each coordinate Zn(2+).

The protein belongs to the KduI family. Requires Zn(2+) as cofactor.

The enzyme catalyses 5-dehydro-4-deoxy-D-glucuronate = 3-deoxy-D-glycero-2,5-hexodiulosonate. It participates in glycan metabolism; pectin degradation; 2-dehydro-3-deoxy-D-gluconate from pectin: step 4/5. Functionally, catalyzes the isomerization of 5-dehydro-4-deoxy-D-glucuronate to 3-deoxy-D-glycero-2,5-hexodiulosonate. This Cereibacter sphaeroides (strain ATCC 17029 / ATH 2.4.9) (Rhodobacter sphaeroides) protein is 4-deoxy-L-threo-5-hexosulose-uronate ketol-isomerase.